A 294-amino-acid chain; its full sequence is ATP synthase gamma chain (294 aa).

Belongs to the ATPase gamma chain family. As to quaternary structure, F-type ATPases have 2 components, CF(1) - the catalytic core - and CF(0) - the membrane proton channel. CF(1) has five subunits: alpha(3), beta(3), gamma(1), delta(1), epsilon(1). CF(0) has three main subunits: a, b and c.

The protein resides in the cell inner membrane. In terms of biological role, produces ATP from ADP in the presence of a proton gradient across the membrane. The gamma chain is believed to be important in regulating ATPase activity and the flow of protons through the CF(0) complex. This chain is ATP synthase gamma chain, found in Nitratiruptor sp. (strain SB155-2).